The primary structure comprises 76 residues: Small ribosomal subunit protein bS16 (76 aa).

Belongs to the bacterial ribosomal protein bS16 family.

This is Small ribosomal subunit protein bS16 from Helicobacter pylori (strain P12).